The chain runs to 234 residues: tRNA (guanine-N(1)-)-methyltransferase (234 aa).

Residues G112 and 132–137 (IGDFIL) contribute to the S-adenosyl-L-methionine site.

The protein belongs to the RNA methyltransferase TrmD family. In terms of assembly, homodimer.

The protein localises to the cytoplasm. The enzyme catalyses guanosine(37) in tRNA + S-adenosyl-L-methionine = N(1)-methylguanosine(37) in tRNA + S-adenosyl-L-homocysteine + H(+). Its function is as follows. Specifically methylates guanosine-37 in various tRNAs. The polypeptide is tRNA (guanine-N(1)-)-methyltransferase (Campylobacter jejuni subsp. doylei (strain ATCC BAA-1458 / RM4099 / 269.97)).